The following is a 465-amino-acid chain: Cysteine--tRNA ligase (465 aa).

Cysteine 30 is a binding site for Zn(2+). Residues 32–42 carry the 'HIGH' region motif; it reads ITVYDYCHVGH. Zn(2+) contacts are provided by cysteine 214, histidine 239, and glutamate 243. Positions 271-275 match the 'KMSKS' region motif; sequence KMSKS. Residue lysine 274 participates in ATP binding.

Belongs to the class-I aminoacyl-tRNA synthetase family. As to quaternary structure, monomer. Zn(2+) serves as cofactor.

It localises to the cytoplasm. It catalyses the reaction tRNA(Cys) + L-cysteine + ATP = L-cysteinyl-tRNA(Cys) + AMP + diphosphate. The chain is Cysteine--tRNA ligase from Burkholderia cenocepacia (strain HI2424).